Reading from the N-terminus, the 539-residue chain is Chaperonin GroEL 1 (539 aa).

ATP is bound by residues 29 to 32 (TLGP), 86 to 90 (DGTTT), G413, 478 to 480 (NAA), and D494.

Belongs to the chaperonin (HSP60) family. As to quaternary structure, forms a cylinder of 14 subunits composed of two heptameric rings stacked back-to-back. Interacts with the co-chaperonin GroES.

The protein localises to the cytoplasm. It catalyses the reaction ATP + H2O + a folded polypeptide = ADP + phosphate + an unfolded polypeptide.. In terms of biological role, together with its co-chaperonin GroES, plays an essential role in assisting protein folding. The GroEL-GroES system forms a nano-cage that allows encapsulation of the non-native substrate proteins and provides a physical environment optimized to promote and accelerate protein folding. This chain is Chaperonin GroEL 1, found in Corynebacterium diphtheriae (strain ATCC 700971 / NCTC 13129 / Biotype gravis).